A 250-amino-acid polypeptide reads, in one-letter code: Triosephosphate isomerase (250 aa).

Residue 10 to 12 (NWK) participates in substrate binding. Catalysis depends on His-96, which acts as the Electrophile. The active-site Proton acceptor is the Glu-168. Substrate contacts are provided by residues Gly-174, Ser-214, and 235–236 (GG).

This sequence belongs to the triosephosphate isomerase family. Homodimer.

The protein localises to the cytoplasm. It catalyses the reaction D-glyceraldehyde 3-phosphate = dihydroxyacetone phosphate. Its pathway is carbohydrate biosynthesis; gluconeogenesis. The protein operates within carbohydrate degradation; glycolysis; D-glyceraldehyde 3-phosphate from glycerone phosphate: step 1/1. Its function is as follows. Involved in the gluconeogenesis. Catalyzes stereospecifically the conversion of dihydroxyacetone phosphate (DHAP) to D-glyceraldehyde-3-phosphate (G3P). The protein is Triosephosphate isomerase of Streptococcus suis (strain 98HAH33).